Here is a 254-residue protein sequence, read N- to C-terminus: D-aminoacyl-tRNA deacylase (254 aa).

This sequence belongs to the DtdA deacylase family. Monomer. Requires Zn(2+) as cofactor.

It catalyses the reaction a D-aminoacyl-tRNA + H2O = a tRNA + a D-alpha-amino acid + H(+). The catalysed reaction is glycyl-tRNA(Ala) + H2O = tRNA(Ala) + glycine + H(+). In terms of biological role, D-aminoacyl-tRNA deacylase with broad substrate specificity. By recycling D-aminoacyl-tRNA to D-amino acids and free tRNA molecules, this enzyme counteracts the toxicity associated with the formation of D-aminoacyl-tRNA entities in vivo. This chain is D-aminoacyl-tRNA deacylase, found in Methanococcus vannielii (strain ATCC 35089 / DSM 1224 / JCM 13029 / OCM 148 / SB).